Here is a 744-residue protein sequence, read N- to C-terminus: Catalase-peroxidase 3 (744 aa).

The segment at residues 106–228 (WHFAGTYRIG…LAASEMGLIY (123 aa)) is a cross-link (tryptophyl-tyrosyl-methioninium (Trp-Tyr) (with M-254)). Residue H107 is the Proton acceptor of the active site. A cross-link (tryptophyl-tyrosyl-methioninium (Tyr-Met) (with W-106)) is located at residues 228–254 (YVDPQGPATLPDPLASARDIRETFRRM). H269 lines the heme b pocket.

This sequence belongs to the peroxidase family. Peroxidase/catalase subfamily. In terms of assembly, homodimer or homotetramer. Heme b is required as a cofactor. Formation of the three residue Trp-Tyr-Met cross-link is important for the catalase, but not the peroxidase activity of the enzyme.

It catalyses the reaction H2O2 + AH2 = A + 2 H2O. The enzyme catalyses 2 H2O2 = O2 + 2 H2O. In terms of biological role, bifunctional enzyme with both catalase and broad-spectrum peroxidase activity. The protein is Catalase-peroxidase 3 of Mycolicibacterium smegmatis (strain ATCC 700084 / mc(2)155) (Mycobacterium smegmatis).